We begin with the raw amino-acid sequence, 87 residues long: Tektin-2 (87 aa).

Residues 26–55 (VEEELLKEVEVIEATKKALQQRVSQAFQQL) adopt a coiled-coil conformation.

This sequence belongs to the tektin family. As to quaternary structure, microtubule inner protein component of sperm flagellar doublet microtubules. May interact with CCDC172. Post-translationally, tyrosine phosphorylated. Ubiquitinated, leading to its degradation. Deubiquitinated by USP16, promoting its stability. As to expression, detected in sperm flagella (at protein level).

The protein resides in the cytoplasm. It is found in the cytoskeleton. Its subcellular location is the cilium axoneme. It localises to the flagellum axoneme. The protein localises to the microtubule organizing center. Its function is as follows. Microtubule inner protein (MIP) part of the dynein-decorated doublet microtubules (DMTs) in cilia and flagellar axoneme. Plays a key role in the assembly or attachment of the inner dynein arm to microtubules in sperm flagella and tracheal cilia. Forms filamentous polymers in the walls of ciliary and flagellar microtubules. This Mesocricetus auratus (Golden hamster) protein is Tektin-2.